The primary structure comprises 187 residues: dTTP/UTP pyrophosphatase (187 aa).

Asp64 (proton acceptor) is an active-site residue.

It belongs to the Maf family. YhdE subfamily. It depends on a divalent metal cation as a cofactor.

The protein resides in the cytoplasm. The catalysed reaction is dTTP + H2O = dTMP + diphosphate + H(+). The enzyme catalyses UTP + H2O = UMP + diphosphate + H(+). Its function is as follows. Nucleoside triphosphate pyrophosphatase that hydrolyzes dTTP and UTP. May have a dual role in cell division arrest and in preventing the incorporation of modified nucleotides into cellular nucleic acids. This Leptospira interrogans serogroup Icterohaemorrhagiae serovar Lai (strain 56601) protein is dTTP/UTP pyrophosphatase.